Reading from the N-terminus, the 686-residue chain is Protein SDA1 homolog (686 aa).

Phosphoserine is present on residues Ser232, Ser234, and Ser236. A coiled-coil region spans residues 254–315 (KKGSKNKKKL…SCKERFEVKM (62 aa)). The interval 484–508 (LEKEENTENDEDGWESASLSEEEED) is disordered. The segment covering 490 to 508 (TENDEDGWESASLSEEEED) has biased composition (acidic residues). Position 551 is a phosphothreonine (Thr551). The interval 563–586 (MKKEMDAAPGKAQKRKYLDMDSDE) is disordered. Phosphoserine is present on residues Ser584, Ser588, and Ser594. The disordered stretch occupies residues 604–649 (KPKSDKETRLATAMAGRTDRKEFVRKKTKINPFSSSTNKEKKKQKN).

Belongs to the SDA1 family.

Its subcellular location is the nucleus. The protein localises to the nucleolus. In terms of biological role, required for 60S pre-ribosomal subunits export to the cytoplasm. This is Protein SDA1 homolog (Sdad1) from Rattus norvegicus (Rat).